Reading from the N-terminus, the 580-residue chain is Arginine--tRNA ligase (580 aa).

Residues 137-147 (ANPTGPLHIGH) carry the 'HIGH' region motif.

This sequence belongs to the class-I aminoacyl-tRNA synthetase family. As to quaternary structure, monomer.

The protein localises to the cytoplasm. The catalysed reaction is tRNA(Arg) + L-arginine + ATP = L-arginyl-tRNA(Arg) + AMP + diphosphate. The chain is Arginine--tRNA ligase from Anaplasma phagocytophilum (strain HZ).